The sequence spans 567 residues: 25S rRNA (cytosine-C(5))-methyltransferase NSUN5 (567 aa).

Positions 1-17 (MVARRNKPKAPLVKHRF) are enriched in basic residues. Residues 1–88 (MVARRNKPKA…KTPPATKQKF (88 aa)) are disordered. Residues 312–318 (CSAPGNK), glutamate 336, aspartate 363, and aspartate 383 each bind S-adenosyl-L-methionine. The active-site Nucleophile is the cysteine 444.

Belongs to the class I-like SAM-binding methyltransferase superfamily. RsmB/NOP family.

The enzyme catalyses a cytidine in 25S rRNA + S-adenosyl-L-methionine = a 5-methylcytidine in 25S rRNA + S-adenosyl-L-homocysteine + H(+). S-adenosyl-L-methionine-dependent methyltransferase that specifically methylates the C(5) position of cytosine 2268 (m5C2268) in 25S rRNA. This is 25S rRNA (cytosine-C(5))-methyltransferase NSUN5 from Arabidopsis thaliana (Mouse-ear cress).